A 281-amino-acid chain; its full sequence is uncharacterized protein (281 aa).

Residues 242-281 (IDKQSRKKNIIREINDIKSKINDLSNYMDNLISELDDLFD) are a coiled coil.

This is an uncharacterized protein from Acanthamoeba polyphaga (Amoeba).